A 150-amino-acid polypeptide reads, in one-letter code: UPF0208 membrane protein VC_1099 (150 aa).

Transmembrane regions (helical) follow at residues 42–62 (FAIKVMPAVAAISVLTQMVFA) and 70–90 (AIVVALFAMSLPLQGIWWLGH).

It belongs to the UPF0208 family.

The protein resides in the cell inner membrane. The polypeptide is UPF0208 membrane protein VC_1099 (Vibrio cholerae serotype O1 (strain ATCC 39315 / El Tor Inaba N16961)).